We begin with the raw amino-acid sequence, 394 residues long: NAD(P)H-quinone oxidoreductase subunit H (394 aa).

This sequence belongs to the complex I 49 kDa subunit family. As to quaternary structure, NDH-1 can be composed of about 15 different subunits; different subcomplexes with different compositions have been identified which probably have different functions.

The protein resides in the cellular thylakoid membrane. The catalysed reaction is a plastoquinone + NADH + (n+1) H(+)(in) = a plastoquinol + NAD(+) + n H(+)(out). It carries out the reaction a plastoquinone + NADPH + (n+1) H(+)(in) = a plastoquinol + NADP(+) + n H(+)(out). In terms of biological role, NDH-1 shuttles electrons from an unknown electron donor, via FMN and iron-sulfur (Fe-S) centers, to quinones in the respiratory and/or the photosynthetic chain. The immediate electron acceptor for the enzyme in this species is believed to be plastoquinone. Couples the redox reaction to proton translocation, and thus conserves the redox energy in a proton gradient. Cyanobacterial NDH-1 also plays a role in inorganic carbon-concentration. The polypeptide is NAD(P)H-quinone oxidoreductase subunit H (Trichodesmium erythraeum (strain IMS101)).